The chain runs to 772 residues: MDFTNSSCGGSEHRQIEENKPLLGEMSATGGSKMGAVPCRRSLLHFSGMRYKLLQEGDIQVCAIRHPRTFLSKILTSKFLRRWEPHHLTLADNSLTSATPTGYMENSISYSAIEDVQLLSWENAPKYCLQLTIPGGTVLLQAANSYLRDQWFHSLQWKKKIYKYKKVLSNPNRWEVVLKEIRTLVDMALSSPLQDDSIHQAPLEIISKLLSENINLTTQEHESIIVAIAPLLENNHPPPDLCEFFCKHCRERPRSMVVIEVFTPVVQRILKHNMDFGKCPRLRLFTQEYILALNELNAGMEVVKKFIYSMHGPTANCPHPRVLPNVVAVCLAAIYSCYEEFINSRDNSPSLKEIRNGCQQQCDRKPNIPLRLLHTNPDLVSQEVTSTESRHKSVVVTSNEILVEVERNNTVNQKLKANTGNDSEPNLIDCLLICPACSTISIELSPQADRVLACYVEILKMLSDYDDWRPALAILLQPIPFPKEALAHETFTKELKHVIQRFAEDPRQEVHSCLLSVRAGKDGWFQLYSPGGVACDDDGELFASMVHILMGSCYKTKKFLLSLAENKLGPCMLLALRGNQTMVEILCLMLEYNIIENNDTQLQIISTLESTDVGKRMYEQLCDRQRELKELQRKGGPTRLTLPSKSTDADLARLLSSGSFGNLENLSLAFTNVTSACAEQLIKLPSLKQLNLWSTQFGDAGLRVLSEHLTTLQVLNLCETPVSDAGLLALSSMKSLCNLNMNSTKLSADTYEDLKAKLPNLKEVDVRYTEAW.

In terms of domain architecture, PH spans 52–160 (KLLQEGDIQV…WFHSLQWKKK (109 aa)). LRR repeat units follow at residues 662 to 683 (NLEN…QLIK), 686 to 706 (SLKQ…RVLS), 711 to 731 (TLQV…LALS), and 735 to 755 (SLCN…EDLK).

The protein resides in the nucleus. It localises to the cytoplasm. Its function is as follows. Plays a role in T-cell signaling pathway. This is C-Maf-inducing protein (cmip) from Xenopus laevis (African clawed frog).